Reading from the N-terminus, the 324-residue chain is Taste receptor type 2 member 116 (324 aa).

Topologically, residues 1–2 (MN) are extracellular. The chain crosses the membrane as a helical span at residues 3–23 (GVLYITFTVILSVEVIIGNFG). Topologically, residues 24 to 55 (NGIIALVNIMDLAKRRKISSVDQILTALAISR) are cytoplasmic. A helical membrane pass occupies residues 56–76 (IVLLWLVLVSWWLSMFYPGQW). Topologically, residues 77 to 94 (MTEGIDVIVHNVWTTLNQ) are extracellular. A helical transmembrane segment spans residues 95–115 (ISLWLATSFSVFCFLKVANFS). Over 116–128 (NTIFFYLKIRVKK) the chain is Cytoplasmic. A helical transmembrane segment spans residues 129–149 (VMTGTLIMFLLLLGLNIIVIN). Topologically, residues 150–183 (ASKTILIPEYKVNMSNSLNLKNTQISMLFPFANT) are extracellular. The N-linked (GlcNAc...) asparagine glycan is linked to Asn162. The chain crosses the membrane as a helical span at residues 184–204 (LFGFIPFAVSLVTFLLLFFSL). The Cytoplasmic portion of the chain corresponds to 205 to 236 (WKHQRKMHHGAQGCRDSSTKAHIRVLQTLIAS). The helical transmembrane segment at 237–257 (ILLYFVFFLSLVVKVWISLFL) threads the bilayer. The Extracellular portion of the chain corresponds to 258–261 (ERML). The helical transmembrane segment at 262–282 (LLLITQAAKIAFPSLHPWVLI) threads the bilayer. Over 283–324 (LGNAKLRKASLSALQWLRCRHKDEHRRVQRPEVHSCGSSCMP) the chain is Cytoplasmic.

The protein belongs to the G-protein coupled receptor T2R family.

The protein resides in the membrane. Functionally, putative taste receptor which may play a role in the perception of bitterness. In Rattus norvegicus (Rat), this protein is Taste receptor type 2 member 116.